The sequence spans 139 residues: UPF0251 protein Csac_0224 (139 aa).

This sequence belongs to the UPF0251 family.

This is UPF0251 protein Csac_0224 from Caldicellulosiruptor saccharolyticus (strain ATCC 43494 / DSM 8903 / Tp8T 6331).